The chain runs to 229 residues: Flagellar L-ring protein (229 aa).

Positions 1–23 (MLSRLGARALVCLAGVAMLAASG) are cleaved as a signal peptide. A lipid anchor (N-palmitoyl cysteine) is attached at Cys-24. Cys-24 carries the S-diacylglycerol cysteine lipid modification.

It belongs to the FlgH family. As to quaternary structure, the basal body constitutes a major portion of the flagellar organelle and consists of four rings (L,P,S, and M) mounted on a central rod.

It is found in the cell outer membrane. The protein localises to the bacterial flagellum basal body. Functionally, assembles around the rod to form the L-ring and probably protects the motor/basal body from shearing forces during rotation. This chain is Flagellar L-ring protein, found in Cupriavidus taiwanensis (strain DSM 17343 / BCRC 17206 / CCUG 44338 / CIP 107171 / LMG 19424 / R1) (Ralstonia taiwanensis (strain LMG 19424)).